The chain runs to 728 residues: Catalase-peroxidase (728 aa).

The segment at Met1–Asp26 is disordered. The tryptophyl-tyrosyl-methioninium (Trp-Tyr) (with M-244) cross-link spans Trp96–Tyr218. Catalysis depends on His97, which acts as the Proton acceptor. The segment at residues Tyr218–Met244 is a cross-link (tryptophyl-tyrosyl-methioninium (Tyr-Met) (with W-96)). Residue His259 participates in heme b binding.

This sequence belongs to the peroxidase family. Peroxidase/catalase subfamily. Homodimer or homotetramer. Requires heme b as cofactor. Formation of the three residue Trp-Tyr-Met cross-link is important for the catalase, but not the peroxidase activity of the enzyme.

The catalysed reaction is H2O2 + AH2 = A + 2 H2O. It carries out the reaction 2 H2O2 = O2 + 2 H2O. Bifunctional enzyme with both catalase and broad-spectrum peroxidase activity. Important for stationary phase survival. In Rhizobium etli (strain ATCC 51251 / DSM 11541 / JCM 21823 / NBRC 15573 / CFN 42), this protein is Catalase-peroxidase.